The following is a 554-amino-acid chain: 3-(3-hydroxy-phenyl)propionate/3-hydroxycinnamic acid hydroxylase (554 aa).

Residues 17–46 (QVAI…LVEK) and 285–295 (FRIDRVLLAGD) contribute to the FAD site.

The protein belongs to the PheA/TfdB FAD monooxygenase family. FAD serves as cofactor.

It catalyses the reaction 3-(3-hydroxyphenyl)propanoate + NADH + O2 + H(+) = 3-(2,3-dihydroxyphenyl)propanoate + NAD(+) + H2O. The catalysed reaction is (2E)-3-(3-hydroxyphenyl)prop-2-enoate + NADH + O2 + H(+) = (2E)-3-(2,3-dihydroxyphenyl)prop-2-enoate + NAD(+) + H2O. Its pathway is aromatic compound metabolism; 3-phenylpropanoate degradation. In terms of biological role, catalyzes the insertion of one atom of molecular oxygen into position 2 of the phenyl ring of 3-(3-hydroxyphenyl)propionate (3-HPP) and hydroxycinnamic acid (3HCI). This is 3-(3-hydroxy-phenyl)propionate/3-hydroxycinnamic acid hydroxylase from Klebsiella pneumoniae (strain 342).